The chain runs to 59 residues: Photosystem II reaction center protein K (59 aa).

The propeptide occupies 1 to 22; sequence MLNIFSLICLNSDLYSSRFFLA. Residues 38–58 traverse the membrane as a helical segment; sequence MPVIPLFFLLLAFVWQAAVSF.

Belongs to the PsbK family. As to quaternary structure, PSII is composed of 1 copy each of membrane proteins PsbA, PsbB, PsbC, PsbD, PsbE, PsbF, PsbH, PsbI, PsbJ, PsbK, PsbL, PsbM, PsbT, PsbX, PsbY, PsbZ, Psb30/Ycf12, at least 3 peripheral proteins of the oxygen-evolving complex and a large number of cofactors. It forms dimeric complexes.

It is found in the plastid. It localises to the chloroplast thylakoid membrane. One of the components of the core complex of photosystem II (PSII). PSII is a light-driven water:plastoquinone oxidoreductase that uses light energy to abstract electrons from H(2)O, generating O(2) and a proton gradient subsequently used for ATP formation. It consists of a core antenna complex that captures photons, and an electron transfer chain that converts photonic excitation into a charge separation. This is Photosystem II reaction center protein K from Oenothera elata subsp. hookeri (Hooker's evening primrose).